Here is a 430-residue protein sequence, read N- to C-terminus: PCI domain-containing protein 2 homolog (430 aa).

In terms of domain architecture, PCI spans 243–424; sequence ITYRFFNGRL…ALVVSPTNPF (182 aa).

It belongs to the CSN12 family.

This chain is PCI domain-containing protein 2 homolog (pcid2), found in Dictyostelium discoideum (Social amoeba).